Here is a 65-residue protein sequence, read N- to C-terminus: Hainantoxin-X.3 (65 aa).

Residues 1–20 (MNMKILVLVAVLCLVVSTHA) form the signal peptide. A propeptide spanning residues 21–37 (ERHSKTDMGDSPMIQER) is cleaved from the precursor. 3 cysteine pairs are disulfide-bonded: Cys39–Cys56, Cys46–Cys59, and Cys55–Cys64.

The protein belongs to the neurotoxin 36 family. 02 subfamily. In terms of tissue distribution, expressed by the venom gland.

The protein localises to the secreted. Reversibly blocks N-type calcium channels (Cav2.2/CACNA1B) in rat dorsal root ganglion cells. Elicits no toxic symptoms in either vertebrates or invertebrates during a period of 48 hours post-injection, when it was assayed in vivo by direct injection into mice and cockroaches. The polypeptide is Hainantoxin-X.3 (Cyriopagopus hainanus (Chinese bird spider)).